A 212-amino-acid polypeptide reads, in one-letter code: GTP cyclohydrolase 1 (212 aa).

Zn(2+) contacts are provided by cysteine 103, histidine 106, and cysteine 174.

It belongs to the GTP cyclohydrolase I family. In terms of assembly, toroid-shaped homodecamer, composed of two pentamers of five dimers.

The enzyme catalyses GTP + H2O = 7,8-dihydroneopterin 3'-triphosphate + formate + H(+). It functions in the pathway cofactor biosynthesis; 7,8-dihydroneopterin triphosphate biosynthesis; 7,8-dihydroneopterin triphosphate from GTP: step 1/1. The sequence is that of GTP cyclohydrolase 1 from Caulobacter vibrioides (strain ATCC 19089 / CIP 103742 / CB 15) (Caulobacter crescentus).